A 180-amino-acid polypeptide reads, in one-letter code: NADH-quinone oxidoreductase subunit I (180 aa).

4Fe-4S ferredoxin-type domains follow at residues Leu50–Ala80 and Glu90–Asp119. [4Fe-4S] cluster is bound by residues Cys60, Cys63, Cys66, Cys70, Cys99, Cys102, Cys105, and Cys109.

Belongs to the complex I 23 kDa subunit family. NDH-1 is composed of 13 different subunits. Subunits NuoA, H, J, K, L, M, N constitute the membrane sector of the complex. Requires [4Fe-4S] cluster as cofactor.

It is found in the cell inner membrane. The catalysed reaction is a quinone + NADH + 5 H(+)(in) = a quinol + NAD(+) + 4 H(+)(out). NDH-1 shuttles electrons from NADH, via FMN and iron-sulfur (Fe-S) centers, to quinones in the respiratory chain. The immediate electron acceptor for the enzyme in this species is believed to be ubiquinone. Couples the redox reaction to proton translocation (for every two electrons transferred, four hydrogen ions are translocated across the cytoplasmic membrane), and thus conserves the redox energy in a proton gradient. The protein is NADH-quinone oxidoreductase subunit I of Shigella boydii serotype 4 (strain Sb227).